The sequence spans 260 residues: Phosphatidate cytidylyltransferase (260 aa).

A run of 7 helical transmembrane segments spans residues 9-29 (IIAL…LMLF), 46-66 (MIKL…IIML), 70-90 (AGDW…FILL), 102-122 (FMDA…FMYF), 130-150 (LHYI…AYIF), 172-192 (FIGG…FVDF), and 196-216 (IWLL…GDLV).

The protein belongs to the CDS family.

It is found in the cell membrane. The enzyme catalyses a 1,2-diacyl-sn-glycero-3-phosphate + CTP + H(+) = a CDP-1,2-diacyl-sn-glycerol + diphosphate. It participates in phospholipid metabolism; CDP-diacylglycerol biosynthesis; CDP-diacylglycerol from sn-glycerol 3-phosphate: step 3/3. The chain is Phosphatidate cytidylyltransferase (cdsA) from Staphylococcus haemolyticus (strain JCSC1435).